Consider the following 189-residue polypeptide: Dual-action ribosomal maturation protein DarP (189 aa).

The tract at residues 1–22 (MWKNGAMRGCNKETGEFLGPSR) is disordered.

It belongs to the DarP family.

Its subcellular location is the cytoplasm. Its function is as follows. Member of a network of 50S ribosomal subunit biogenesis factors which assembles along the 30S-50S interface, preventing incorrect 23S rRNA structures from forming. Promotes peptidyl transferase center (PTC) maturation. The sequence is that of Dual-action ribosomal maturation protein DarP from Xylella fastidiosa (strain Temecula1 / ATCC 700964).